The following is a 75-amino-acid chain: Exodeoxyribonuclease 7 small subunit (75 aa).

This sequence belongs to the XseB family. In terms of assembly, heterooligomer composed of large and small subunits.

Its subcellular location is the cytoplasm. The catalysed reaction is Exonucleolytic cleavage in either 5'- to 3'- or 3'- to 5'-direction to yield nucleoside 5'-phosphates.. In terms of biological role, bidirectionally degrades single-stranded DNA into large acid-insoluble oligonucleotides, which are then degraded further into small acid-soluble oligonucleotides. The chain is Exodeoxyribonuclease 7 small subunit from Pelobacter propionicus (strain DSM 2379 / NBRC 103807 / OttBd1).